The chain runs to 921 residues: MEYKNTLLMPKTEFPMRGNLPKREPAMQEKWAEMNIYEKVQEHTKGRPLFVLHDGPPYANGDIHMGHALNKVLKDFIVRYKSMTGFCAPYVPGWDTHGLPIEQALTNKGVKRKEMTVAEFRKLCAEYAYEQVERQREQFKRLGVRADWDNPYITLEPAYEAQQIKVFGDMAKKGYIYKGQKPVYWSPTSESALAEAEIEYQDKKSASIYVAFPVKDGKNVLEGDEKYIIWTTTPWTLPANLGISVHPELEYAIVKVNDEKYIIASELFETVAKTLEWENAEVVKTVKGSELEYTVAKHPFYDRDSLVMLGDHVTTDAGTGCVHTAPGHGEDDFIVGKKYGLEVLCPVDDKGVLTEEAPGFEGLFYDKANKPITEKLEEVGALLKLTFITHSYPHDWRTKKPIIFRATAQWFASIEAFRKELLEAVAETKWVPAWGETRLHNMVRDRGDWCISRQRAWGVPIPVFYAENGDPIITDETINHVADLFREHGSNVWFEREAKDLLPEGFTHPGSPNGEFRKETDIMDVWFDSGSSHQAVLEERDDLQRPADLYLEGSDQYRGWFNSSLSTAVAVTGKAPYKGVLSHGFVLDGEGRKMSKSIGNIVVPKKIMDQLGGDILRLWVSSVDYQSDVRISDDILKQVAEVYRKIRNTFRFLLGNLDDFKPSENTVAVAELREVDRYMLVKLNDLITKVKEAYETYDFAAVYHAIHNFCTIDLSSFYLDFAKDILYIEGANHEDRRAIQTVLYDVLVALTKLVTPILPHTADEVWPYIPGVTEESVQLTDMPEAVQLDDAEALKTKWDAFMTLRDDVLKALEVARNEKVIGKSLNASITLYPTAEMKAMLESINEDLKQLFIVSEYKLGGMMEEAPADAPKYEHTAVVVAQATGETCERCWVVSETIGKDAEHETLCERCATVVKENYVK.

The 'HIGH' region signature appears at P57 to H67. E552 is a binding site for L-isoleucyl-5'-AMP. The 'KMSKS' region motif lies at K593 to S597. K596 is a binding site for ATP. Zn(2+) contacts are provided by C888, C891, C908, and C911.

This sequence belongs to the class-I aminoacyl-tRNA synthetase family. IleS type 1 subfamily. In terms of assembly, monomer. Zn(2+) is required as a cofactor.

Its subcellular location is the cytoplasm. The catalysed reaction is tRNA(Ile) + L-isoleucine + ATP = L-isoleucyl-tRNA(Ile) + AMP + diphosphate. Its function is as follows. Catalyzes the attachment of isoleucine to tRNA(Ile). As IleRS can inadvertently accommodate and process structurally similar amino acids such as valine, to avoid such errors it has two additional distinct tRNA(Ile)-dependent editing activities. One activity is designated as 'pretransfer' editing and involves the hydrolysis of activated Val-AMP. The other activity is designated 'posttransfer' editing and involves deacylation of mischarged Val-tRNA(Ile). This Bacillus cereus (strain AH820) protein is Isoleucine--tRNA ligase.